The primary structure comprises 233 residues: Large ribosomal subunit protein uL1 (233 aa).

Belongs to the universal ribosomal protein uL1 family. Part of the 50S ribosomal subunit.

Functionally, binds directly to 23S rRNA. The L1 stalk is quite mobile in the ribosome, and is involved in E site tRNA release. In terms of biological role, protein L1 is also a translational repressor protein, it controls the translation of the L11 operon by binding to its mRNA. The protein is Large ribosomal subunit protein uL1 of Parvibaculum lavamentivorans (strain DS-1 / DSM 13023 / NCIMB 13966).